The sequence spans 300 residues: Soluble inorganic pyrophosphatase 6, chloroplastic (300 aa).

Residues 1-66 (MAATRVLTAA…CSAIYNPQVK (66 aa)) constitute a chloroplast transit peptide. Residue arginine 140 participates in diphosphate binding. Residue tyrosine 142 is the Proton donor of the active site. Positions 173, 178, and 210 each coordinate Mg(2+).

Belongs to the PPase family. The cofactor is Mg(2+). In terms of tissue distribution, expressed in all tissues tested. Highest expression in flowers, leaves and roots. Lower levels of expression in siliques, stems, ovary, stigma and pollen.

The protein resides in the plastid. It localises to the chloroplast stroma. It catalyses the reaction diphosphate + H2O = 2 phosphate + H(+). Its activity is regulated as follows. Inhibited by NaF. The protein is Soluble inorganic pyrophosphatase 6, chloroplastic of Arabidopsis thaliana (Mouse-ear cress).